A 216-amino-acid chain; its full sequence is Probable nicotinate-nucleotide adenylyltransferase (216 aa).

Belongs to the NadD family.

It catalyses the reaction nicotinate beta-D-ribonucleotide + ATP + H(+) = deamido-NAD(+) + diphosphate. Its pathway is cofactor biosynthesis; NAD(+) biosynthesis; deamido-NAD(+) from nicotinate D-ribonucleotide: step 1/1. Catalyzes the reversible adenylation of nicotinate mononucleotide (NaMN) to nicotinic acid adenine dinucleotide (NaAD). The chain is Probable nicotinate-nucleotide adenylyltransferase from Citrifermentans bemidjiense (strain ATCC BAA-1014 / DSM 16622 / JCM 12645 / Bem) (Geobacter bemidjiensis).